We begin with the raw amino-acid sequence, 464 residues long: Kynureninase 2 (464 aa).

Residues Leu135, Thr136, 163–166, Asp248, His251, and Tyr273 each bind pyridoxal 5'-phosphate; that span reads FPSD. At Lys274 the chain carries N6-(pyridoxal phosphate)lysine. Pyridoxal 5'-phosphate-binding residues include Trp313 and Asn341.

The protein belongs to the kynureninase family. As to quaternary structure, homodimer. The cofactor is pyridoxal 5'-phosphate.

It localises to the cytoplasm. It catalyses the reaction L-kynurenine + H2O = anthranilate + L-alanine + H(+). The catalysed reaction is 3-hydroxy-L-kynurenine + H2O = 3-hydroxyanthranilate + L-alanine + H(+). Its pathway is amino-acid degradation; L-kynurenine degradation; L-alanine and anthranilate from L-kynurenine: step 1/1. It functions in the pathway cofactor biosynthesis; NAD(+) biosynthesis; quinolinate from L-kynurenine: step 2/3. In terms of biological role, catalyzes the cleavage of L-kynurenine (L-Kyn) and L-3-hydroxykynurenine (L-3OHKyn) into anthranilic acid (AA) and 3-hydroxyanthranilic acid (3-OHAA), respectively. This Aspergillus fumigatus (strain CBS 144.89 / FGSC A1163 / CEA10) (Neosartorya fumigata) protein is Kynureninase 2 (bna5-2).